The following is a 337-amino-acid chain: Glycerol-3-phosphate dehydrogenase [NAD(P)+] (337 aa).

Positions 11, 30, and 113 each coordinate NADPH. 3 residues coordinate sn-glycerol 3-phosphate: lysine 113, glycine 141, and serine 143. NADPH is bound at residue alanine 145. Sn-glycerol 3-phosphate is bound by residues lysine 196, aspartate 249, serine 259, arginine 260, and asparagine 261. Lysine 196 serves as the catalytic Proton acceptor. Arginine 260 serves as a coordination point for NADPH. Valine 284 and glutamate 286 together coordinate NADPH.

It belongs to the NAD-dependent glycerol-3-phosphate dehydrogenase family.

The protein resides in the cytoplasm. It catalyses the reaction sn-glycerol 3-phosphate + NAD(+) = dihydroxyacetone phosphate + NADH + H(+). The enzyme catalyses sn-glycerol 3-phosphate + NADP(+) = dihydroxyacetone phosphate + NADPH + H(+). It participates in membrane lipid metabolism; glycerophospholipid metabolism. Catalyzes the reduction of the glycolytic intermediate dihydroxyacetone phosphate (DHAP) to sn-glycerol 3-phosphate (G3P), the key precursor for phospholipid synthesis. This is Glycerol-3-phosphate dehydrogenase [NAD(P)+] from Leptothrix cholodnii (strain ATCC 51168 / LMG 8142 / SP-6) (Leptothrix discophora (strain SP-6)).